We begin with the raw amino-acid sequence, 761 residues long: Isocyanide synthase xanB (761 aa).

Residues 24–128 (LLGSYETKAP…GKGTKADPSH (105 aa)) form a disordered region. Residues 36 to 48 (ETSEIAASSSSSE) show a composition bias toward low complexity. Residues 93–102 (TVSTPQSSDN) are compositionally biased toward polar residues. Over residues 115–126 (FKDEGKGTKADP) the composition is skewed to basic and acidic residues.

Belongs to the isocyanide synthase family.

It participates in secondary metabolite biosynthesis. Its function is as follows. Isocyanide synthase; part of the gene cluster that mediates the biosynthesis of the isocyanide xanthocillin and its derivatives. The first step of the pathway consists in the conversion of tyrosine into a vinyl-isonitrile intermediate by the isocyanide synthase xanB. Subsequent oxidative dimerization of this intermediate to form xanthocillin may involve the cytochrome P450 monooxygenase xanG, whose expression is coregulated with that of XanB. Xanthocillin can be further modified by the isonitrile hydratase-like protein xanA which introduces N-formyl groups and the methyltransferase xanE which introduces methyl groups, leading to the production of several derivatives including fumiformamide. Finally, fumiformamide can be subject to both oxidative and reductive cyclization to yield melanocins E and F, respectively. This chain is Isocyanide synthase xanB, found in Aspergillus fumigatus (strain ATCC MYA-4609 / CBS 101355 / FGSC A1100 / Af293) (Neosartorya fumigata).